Consider the following 338-residue polypeptide: MLGRCFPPDTKEKQQLRMTKLCDPAESELSPFLITLILAVLLAEYLIGIIANGFIMAIHAAEWVQNKAVSTSGRILVFLSVSRIALQSLMMLEITISSTSLSFYSEDAVYYAFKISFIFLNFCSLWFAAWLSFFYFVKIANFSYPLFLKLRWRITGLIPWLLWLSVFISFSHSMFCINIXTVYCNNSFPIHSSNSTKKTYLSEINVVGLAFFFNLGIVTPLIMFILTATLLILSLKRHTLHMGSNATGSNDPSMEAHMGAIKATSYFLILYIFNAVALFIYLSNMFDINSLWNNLCQIIMAAYPASHSILLIQDNPGLRRAWKRLQLRLHLYPKEWTL.

Over 1 to 30 (MLGRCFPPDTKEKQQLRMTKLCDPAESELS) the chain is Extracellular. The chain crosses the membrane as a helical span at residues 31–51 (PFLITLILAVLLAEYLIGIIA). Residues 52-74 (NGFIMAIHAAEWVQNKAVSTSGR) lie on the Cytoplasmic side of the membrane. The chain crosses the membrane as a helical span at residues 75–95 (ILVFLSVSRIALQSLMMLEIT). The Extracellular segment spans residues 96–116 (ISSTSLSFYSEDAVYYAFKIS). The helical transmembrane segment at 117–137 (FIFLNFCSLWFAAWLSFFYFV) threads the bilayer. Topologically, residues 138–156 (KIANFSYPLFLKLRWRITG) are cytoplasmic. Residues 157–177 (LIPWLLWLSVFISFSHSMFCI) traverse the membrane as a helical segment. Over 178-205 (NIXTVYCNNSFPIHSSNSTKKTYLSEIN) the chain is Extracellular. N-linked (GlcNAc...) asparagine glycosylation is found at Asn185 and Asn194. A helical membrane pass occupies residues 206–226 (VVGLAFFFNLGIVTPLIMFIL). Residues 227 to 262 (TATLLILSLKRHTLHMGSNATGSNDPSMEAHMGAIK) lie on the Cytoplasmic side of the membrane. The helical transmembrane segment at 263-283 (ATSYFLILYIFNAVALFIYLS) threads the bilayer. The Extracellular portion of the chain corresponds to 284–291 (NMFDINSL). Residues 292-312 (WNNLCQIIMAAYPASHSILLI) form a helical membrane-spanning segment. Residues 313–338 (QDNPGLRRAWKRLQLRLHLYPKEWTL) are Cytoplasmic-facing.

It belongs to the G-protein coupled receptor T2R family.

It localises to the membrane. In terms of biological role, receptor that may play a role in the perception of bitterness and is gustducin-linked. May play a role in sensing the chemical composition of the gastrointestinal content. The activity of this receptor may stimulate alpha gustducin, mediate PLC-beta-2 activation and lead to the gating of TRPM5. The protein is Taste receptor type 2 member 39 (TAS2R39) of Gorilla gorilla gorilla (Western lowland gorilla).